Consider the following 127-residue polypeptide: MLAPEHRLRSSALFSTVVKKGARKGSRTLVVHLWTPEPGPDAPLELTGGPRAGLIVSKAVGNAVVRHAVSRKLRAVLATIIDEDATAASPQLQETSFVVVRALPGSAEASSKELESDVRRCLSRLSR.

The protein belongs to the RnpA family. As to quaternary structure, consists of a catalytic RNA component (M1 or rnpB) and a protein subunit.

The catalysed reaction is Endonucleolytic cleavage of RNA, removing 5'-extranucleotides from tRNA precursor.. RNaseP catalyzes the removal of the 5'-leader sequence from pre-tRNA to produce the mature 5'-terminus. It can also cleave other RNA substrates such as 4.5S RNA. The protein component plays an auxiliary but essential role in vivo by binding to the 5'-leader sequence and broadening the substrate specificity of the ribozyme. This is Ribonuclease P protein component from Corynebacterium urealyticum (strain ATCC 43042 / DSM 7109).